A 155-amino-acid polypeptide reads, in one-letter code: 6,7-dimethyl-8-ribityllumazine synthase (155 aa).

Residues F24, A58–E60, and V82–I84 contribute to the 5-amino-6-(D-ribitylamino)uracil site. Residue S87 to T88 coordinates (2S)-2-hydroxy-3-oxobutyl phosphate. H90 (proton donor) is an active-site residue. Position 115 (F115) interacts with 5-amino-6-(D-ribitylamino)uracil. Residue R129 coordinates (2S)-2-hydroxy-3-oxobutyl phosphate.

The protein belongs to the DMRL synthase family.

The catalysed reaction is (2S)-2-hydroxy-3-oxobutyl phosphate + 5-amino-6-(D-ribitylamino)uracil = 6,7-dimethyl-8-(1-D-ribityl)lumazine + phosphate + 2 H2O + H(+). It participates in cofactor biosynthesis; riboflavin biosynthesis; riboflavin from 2-hydroxy-3-oxobutyl phosphate and 5-amino-6-(D-ribitylamino)uracil: step 1/2. In terms of biological role, catalyzes the formation of 6,7-dimethyl-8-ribityllumazine by condensation of 5-amino-6-(D-ribitylamino)uracil with 3,4-dihydroxy-2-butanone 4-phosphate. This is the penultimate step in the biosynthesis of riboflavin. The polypeptide is 6,7-dimethyl-8-ribityllumazine synthase (Chlorobium chlorochromatii (strain CaD3)).